The primary structure comprises 94 residues: DNA-directed RNA polymerase subunit omega (94 aa).

Belongs to the RNA polymerase subunit omega family. As to quaternary structure, the RNAP catalytic core consists of 2 alpha, 1 beta, 1 beta' and 1 omega subunit. When a sigma factor is associated with the core the holoenzyme is formed, which can initiate transcription.

The enzyme catalyses RNA(n) + a ribonucleoside 5'-triphosphate = RNA(n+1) + diphosphate. In terms of biological role, promotes RNA polymerase assembly. Latches the N- and C-terminal regions of the beta' subunit thereby facilitating its interaction with the beta and alpha subunits. In Frankia casuarinae (strain DSM 45818 / CECT 9043 / HFP020203 / CcI3), this protein is DNA-directed RNA polymerase subunit omega.